A 259-amino-acid polypeptide reads, in one-letter code: Protein unc-50 homolog (259 aa).

Residue M1 is modified to N-acetylmethionine. Residues 1–82 lie on the Cytoplasmic side of the membrane; it reads MLPSTSLSSS…TKDQWARDDP (82 aa). S6 is modified (phosphoserine). Residues 83-103 form a helical membrane-spanning segment; the sequence is AFLVLLSIWLCVSTIGFGFVL. The Lumenal segment spans residues 104 to 112; sequence DMGFFETIK. A helical transmembrane segment spans residues 113 to 133; that stretch reads LLLWVVFIDCVGVGLLISTLM. Residues 134–163 lie on the Cytoplasmic side of the membrane; that stretch reads WFVSNKYLVKRQSRDYDVEWGYAFDVHLNA. The helical transmembrane segment at 164–184 threads the bilayer; the sequence is FYPLLVILHFIQLFFINHVIL. The Lumenal portion of the chain corresponds to 185–187; it reads TDT. Residues 188 to 208 form a helical membrane-spanning segment; it reads FIGYLVGNTLWLIAVGYYIYV. Residues 209-222 are Cytoplasmic-facing; the sequence is TFLGYSALPFLKNT. Residues 223–243 traverse the membrane as a helical segment; the sequence is VILLYPFAPLMVLYGLSLALG. Residues 244–259 are Lumenal-facing; it reads WNFTHTLCSFYKYRVK.

This sequence belongs to the unc-50 family. Highly expressed in periodontal ligament and bone marrow, but not in gingival fibroblasts.

It is found in the nucleus inner membrane. It localises to the golgi apparatus membrane. Its function is as follows. Involved in the cell surface expression of neuronal nicotinic receptors. Binds RNA. The protein is Protein unc-50 homolog (Unc50) of Mus musculus (Mouse).